A 125-amino-acid polypeptide reads, in one-letter code: Hydrogenase maturation factor HypA (125 aa).

Histidine 2 is a Ni(2+) binding site. Zn(2+)-binding residues include cysteine 73, cysteine 76, cysteine 96, and cysteine 99.

It belongs to the HypA/HybF family.

Its function is as follows. Involved in the maturation of [NiFe] hydrogenases. Required for nickel insertion into the metal center of the hydrogenase. This Methanobrevibacter smithii (strain ATCC 35061 / DSM 861 / OCM 144 / PS) protein is Hydrogenase maturation factor HypA.